The sequence spans 160 residues: Putative 4-hydroxy-4-methyl-2-oxoglutarate aldolase (160 aa).

Substrate is bound by residues 78–81 (GDVI) and Arg-100. Asp-101 lines the a divalent metal cation pocket.

The protein belongs to the class II aldolase/RraA-like family. As to quaternary structure, homotrimer. A divalent metal cation serves as cofactor.

It catalyses the reaction 4-hydroxy-4-methyl-2-oxoglutarate = 2 pyruvate. The enzyme catalyses oxaloacetate + H(+) = pyruvate + CO2. Its function is as follows. Catalyzes the aldol cleavage of 4-hydroxy-4-methyl-2-oxoglutarate (HMG) into 2 molecules of pyruvate. Also contains a secondary oxaloacetate (OAA) decarboxylase activity due to the common pyruvate enolate transition state formed following C-C bond cleavage in the retro-aldol and decarboxylation reactions. The protein is Putative 4-hydroxy-4-methyl-2-oxoglutarate aldolase of Mycolicibacterium paratuberculosis (strain ATCC BAA-968 / K-10) (Mycobacterium paratuberculosis).